Reading from the N-terminus, the 164-residue chain is Osteocalcin 2b (164 aa).

The N-terminal stretch at 1 to 18 (MKSLTLLTICAVLSVSLS) is a signal peptide. Positions 19–115 (MNDLALDVVL…LASVLLRRKR (97 aa)) are excised as a propeptide. Residues 30–95 (PDPAAEPAPA…EAMAEDPAAA (66 aa)) are compositionally biased toward low complexity. Positions 30-99 (PDPAAEPAPA…EDPAAATEPE (70 aa)) are disordered. Residues 128-160 (QVESLSEVCELNLACEHMAETAGIVAAYTAYYG) form the Gla domain. E130, E134, and E137 together coordinate Ca(2+). 4-carboxyglutamate occurs at positions 130, 134, and 137. C136 and C142 form a disulfide bridge.

The protein belongs to the osteocalcin/matrix Gla protein family. Gamma-carboxyglutamate residues are formed by vitamin K dependent carboxylation. These residues are essential for the binding of calcium.

It is found in the secreted. Binds strongly to apatite and calcium. The chain is Osteocalcin 2b from Oncorhynchus mykiss (Rainbow trout).